Reading from the N-terminus, the 344-residue chain is Phenylalanine--tRNA ligase alpha subunit (344 aa).

E256 is a Mg(2+) binding site.

It belongs to the class-II aminoacyl-tRNA synthetase family. Phe-tRNA synthetase alpha subunit type 1 subfamily. As to quaternary structure, tetramer of two alpha and two beta subunits. Requires Mg(2+) as cofactor.

Its subcellular location is the cytoplasm. The catalysed reaction is tRNA(Phe) + L-phenylalanine + ATP = L-phenylalanyl-tRNA(Phe) + AMP + diphosphate + H(+). This chain is Phenylalanine--tRNA ligase alpha subunit, found in Bacillus anthracis (strain CDC 684 / NRRL 3495).